The chain runs to 675 residues: Heat shock 70 kDa protein, mitochondrial (675 aa).

A mitochondrion-targeting transit peptide spans 1-52; it reads MAATLLRSLQRRNLSSSSVSAFRSLTGSTKTSYATHKLASLTRPFSSRPAGN. A disordered region spans residues 639-675; that stretch reads VSKIGQHMSGGSSGGPSEGGSQGGEQAPEAEYEEVKK. The span at 649 to 661 shows a compositional bias: gly residues; it reads GSSGGPSEGGSQG. The segment covering 666–675 has biased composition (acidic residues); that stretch reads PEAEYEEVKK.

The protein belongs to the heat shock protein 70 family.

It is found in the mitochondrion. The chain is Heat shock 70 kDa protein, mitochondrial (HSP1) from Pisum sativum (Garden pea).